The chain runs to 473 residues: Lysophospholipid acyltransferase 5 (473 aa).

A run of 4 helical transmembrane segments spans residues 20–40, 43–63, 66–86, and 88–108; these read LLIS…FFYN, AQHQ…FNCG, VIHP…MAGT, and ASIY…YWFH. Active-site residues include Asn315 and His351. 3 consecutive transmembrane segments (helical) span residues 341–361, 396–416, and 431–451; these read VITL…FLLF, FIWI…FLMF, and LYFI…MVLL. A Di-lysine motif motif is present at residues 470-473; the sequence is KKEL.

This sequence belongs to the membrane-bound acyltransferase family.

Its subcellular location is the endoplasmic reticulum membrane. The catalysed reaction is a 1-acyl-sn-glycero-3-phosphocholine + an acyl-CoA = a 1,2-diacyl-sn-glycero-3-phosphocholine + CoA. It catalyses the reaction a 1-acyl-sn-glycero-3-phospho-L-serine + an acyl-CoA = a 1,2-diacyl-sn-glycero-3-phospho-L-serine + CoA. It carries out the reaction a 1-acyl-sn-glycero-3-phosphoethanolamine + an acyl-CoA = a 1,2-diacyl-sn-glycero-3-phosphoethanolamine + CoA. The protein operates within lipid metabolism; phospholipid metabolism. Functionally, probable acyltransferase which may mediate the conversion of lysophosphatidylcholine (1-acyl-sn-glycero-3-phosphocholine or LPC) into phosphatidylcholine (1,2-diacyl-sn-glycero-3-phosphocholine or PC) (LPCAT activity). May also catalyze the conversion of lysophosphatidylethanolamine (1-acyl-2-hydroxy-sn-glycero-3-phosphoethanolamine or LPE) into phosphatidylethanolamine (1,2-diacyl-sn-glycero-3-phosphoethanolamine or PE) (LPEAT activity), as well as the conversion of lysophosphatidylserine (1-acyl-2-hydroxy-sn-glycero-3-phospho-L-serine or LPS) into phosphatidylserine (1,2-diacyl-sn-glycero-3-phospho-L-serine or PS) (LPSAT activity). Required for incorporation of arachidonic acid into PC, PE, and PS. The polypeptide is Lysophospholipid acyltransferase 5 (mboa-6) (Caenorhabditis elegans).